The following is a 179-amino-acid chain: Large ribosomal subunit protein uL5 (179 aa).

Belongs to the universal ribosomal protein uL5 family. Part of the 50S ribosomal subunit; part of the 5S rRNA/L5/L18/L25 subcomplex. Contacts the 5S rRNA and the P site tRNA. Forms a bridge to the 30S subunit in the 70S ribosome.

Functionally, this is one of the proteins that bind and probably mediate the attachment of the 5S RNA into the large ribosomal subunit, where it forms part of the central protuberance. In the 70S ribosome it contacts protein S13 of the 30S subunit (bridge B1b), connecting the 2 subunits; this bridge is implicated in subunit movement. Contacts the P site tRNA; the 5S rRNA and some of its associated proteins might help stabilize positioning of ribosome-bound tRNAs. This is Large ribosomal subunit protein uL5 from Shewanella denitrificans (strain OS217 / ATCC BAA-1090 / DSM 15013).